The following is a 680-amino-acid chain: Dihydroxyacetone phosphate acyltransferase (680 aa).

Phosphoserine occurs at positions 12 and 17. The short motif at 162–167 (HRSYID) is the HXXXXD motif element. Lysine 643 bears the N6-acetyllysine mark. The Microbody targeting signal motif lies at 678 to 680 (AKL).

This sequence belongs to the GPAT/DAPAT family. In terms of assembly, part of a heterotrimeric complex composed of GNPAT, AGPS and a modified form of GNPAT.

Its subcellular location is the peroxisome membrane. The catalysed reaction is dihydroxyacetone phosphate + an acyl-CoA = a 1-acylglycerone 3-phosphate + CoA. It carries out the reaction dihydroxyacetone phosphate + hexadecanoyl-CoA = 1-hexadecanoylglycerone 3-phosphate + CoA. It participates in membrane lipid metabolism; glycerophospholipid metabolism. In terms of biological role, dihydroxyacetonephosphate acyltransferase catalyzing the first step in the biosynthesis of plasmalogens, a subset of phospholipids that differ from other glycerolipids by having an alkyl chain attached through a vinyl ether linkage at the sn-1 position of the glycerol backbone, and which unique physical properties have an impact on various aspects of cell signaling and membrane biology. The polypeptide is Dihydroxyacetone phosphate acyltransferase (Bos taurus (Bovine)).